A 1171-amino-acid chain; its full sequence is WD repeat-containing protein on Y chromosome (1171 aa).

WD repeat units follow at residues 157–201 (EIPE…LRSA), 331–370 (RIPL…EPSA), 374–413 (GHNG…LLQT), 464–503 (THAA…RKII), 516–555 (IIDI…VVRN), 603–643 (FHTD…RRYN), 748–787 (KVGD…IPQA), and 831–870 (GHLK…LGTL). The segment at 1076–1171 (RTSFTLSDYT…TNTMKSSNSH (96 aa)) is disordered. Polar residues-rich tracts occupy residues 1094–1106 (SSRN…SSGS) and 1161–1171 (KTNTMKSSNSH).

This chain is WD repeat-containing protein on Y chromosome, found in Drosophila grimshawi (Hawaiian fruit fly).